A 723-amino-acid polypeptide reads, in one-letter code: Polyribonucleotide nucleotidyltransferase (723 aa).

Positions 487 and 493 each coordinate Mg(2+). Positions 554–613 (PKILIMHINPDKIREVIGPSGKQINKIIDETGVKIDIEQDGTIFISSVDEAANQKAKQII) constitute a KH domain. In terms of domain architecture, S1 motif spans 623–691 (GQVYLGKVKR…KQGRVNLSRK (69 aa)). Residues 702–723 (GELPRESREKRGRRPERHRMKP) form a disordered region. Residues 711–723 (KRGRRPERHRMKP) are compositionally biased toward basic residues.

This sequence belongs to the polyribonucleotide nucleotidyltransferase family. Mg(2+) is required as a cofactor.

The protein localises to the cytoplasm. The catalysed reaction is RNA(n+1) + phosphate = RNA(n) + a ribonucleoside 5'-diphosphate. Involved in mRNA degradation. Catalyzes the phosphorolysis of single-stranded polyribonucleotides processively in the 3'- to 5'-direction. The polypeptide is Polyribonucleotide nucleotidyltransferase (Geobacillus kaustophilus (strain HTA426)).